The primary structure comprises 689 residues: uncharacterized protein (689 aa).

4 disordered regions span residues 121-206 (LALK…VDPS), 286-305 (ASSNQSAAHPDGNNALPMDN), 322-414 (NSYS…SMAH), and 552-611 (AAMP…HLSD). A compositionally biased stretch (low complexity) spans 133–158 (SPNNSIPLMANSCLLSADNSSSSTTS). Residues 322–380 (NSYSYDRYTPNQPSYLESKPGNHQPSYTSEQPMYSTASVPQQISNGPTAVNGLPMNSYT) are compositionally biased toward polar residues. 2 stretches are compositionally biased toward low complexity: residues 381–411 (PHSNHLHSPSPNSNSGPTDSLSAPNSTSSPS) and 560–572 (PSAHDSASAPSPH).

It localises to the cytoplasm. This is an uncharacterized protein from Schizosaccharomyces pombe (strain 972 / ATCC 24843) (Fission yeast).